The sequence spans 429 residues: Serum response factor-binding protein 1 (429 aa).

N-acetylalanine is present on alanine 2. 2 coiled-coil regions span residues 42–67 and 108–146; these read KGTEDALLKNQRRAQRLLEEIHAMKE and LLKKKIDVLKAAVQAFKEARQNVAEVESSKNASEDNHSE. Disordered regions lie at residues 131–157 and 176–429; these read AEVESSKNASEDNHSENTLYSNDNGSN and LAKK…TFDD. Positions 146–157 are enriched in polar residues; the sequence is ENTLYSNDNGSN. Positions 183–195 are enriched in basic and acidic residues; it reads NSKEKIAKMEHGP. Lysine 190 is covalently cross-linked (Glycyl lysine isopeptide (Lys-Gly) (interchain with G-Cter in SUMO2)). Phosphoserine occurs at positions 203, 205, 264, 279, and 281. Residues 249-265 are compositionally biased toward acidic residues; the sequence is GGEEFCEEEKEYFDDST. Over residues 296-341 the composition is skewed to basic and acidic residues; that stretch reads KESSCHSSVKEQKPLEKVFLKEDTGETHGDTRNDKIKPSTETRKLE. Residue lysine 316 forms a Glycyl lysine isopeptide (Lys-Gly) (interchain with G-Cter in SUMO2) linkage. Phosphoserine is present on residues serine 349, serine 351, and serine 367. The span at 357-367 shows a compositional bias: basic and acidic residues; that stretch reads NFKEQAPKTRS. The span at 373–383 shows a compositional bias: polar residues; sequence NEPQIKNQFNK.

In terms of assembly, interacts with SRF. Forms complexes with SRF and SRF cofactors ARID2, MYOCD and NKX2-5. Interacts with the N-terminus of SLC2A4. As to expression, abundantly expressed in heart and skeletal muscle, and at much lower levels in brain and lung.

It localises to the cytoplasm. The protein resides in the perinuclear region. May be involved in regulating transcriptional activation of cardiac genes during the aging process. May play a role in biosynthesis and/or processing of SLC2A4 in adipose cells. This is Serum response factor-binding protein 1 from Homo sapiens (Human).